Consider the following 142-residue polypeptide: Large ribosomal subunit protein uL13 (142 aa).

Belongs to the universal ribosomal protein uL13 family. As to quaternary structure, part of the 50S ribosomal subunit.

Its function is as follows. This protein is one of the early assembly proteins of the 50S ribosomal subunit, although it is not seen to bind rRNA by itself. It is important during the early stages of 50S assembly. This is Large ribosomal subunit protein uL13 from Cupriavidus metallidurans (strain ATCC 43123 / DSM 2839 / NBRC 102507 / CH34) (Ralstonia metallidurans).